A 461-amino-acid polypeptide reads, in one-letter code: Cysteine--tRNA ligase (461 aa).

C30 serves as a coordination point for Zn(2+). A 'HIGH' region motif is present at residues 32-42 (VTVYDLCHIGH). 3 residues coordinate Zn(2+): C211, H236, and E240. The 'KMSKS' region motif lies at 268–272 (KMSKS). ATP is bound at residue K271.

This sequence belongs to the class-I aminoacyl-tRNA synthetase family. In terms of assembly, monomer. Zn(2+) serves as cofactor.

It is found in the cytoplasm. It catalyses the reaction tRNA(Cys) + L-cysteine + ATP = L-cysteinyl-tRNA(Cys) + AMP + diphosphate. This Shewanella sp. (strain ANA-3) protein is Cysteine--tRNA ligase.